The primary structure comprises 181 residues: Probable nicotinate-nucleotide adenylyltransferase (181 aa).

The protein belongs to the NadD family.

It carries out the reaction nicotinate beta-D-ribonucleotide + ATP + H(+) = deamido-NAD(+) + diphosphate. It functions in the pathway cofactor biosynthesis; NAD(+) biosynthesis; deamido-NAD(+) from nicotinate D-ribonucleotide: step 1/1. Its function is as follows. Catalyzes the reversible adenylation of nicotinate mononucleotide (NaMN) to nicotinic acid adenine dinucleotide (NaAD). The sequence is that of Probable nicotinate-nucleotide adenylyltransferase from Campylobacter jejuni subsp. jejuni serotype O:6 (strain 81116 / NCTC 11828).